The chain runs to 138 residues: Basic phospholipase A2 PLA-B' (138 aa).

Positions 1–16 (MRTLWITAVLLVGVEG) are cleaved as a signal peptide. 7 disulfide bridges follow: cysteine 42–cysteine 131, cysteine 44–cysteine 60, cysteine 59–cysteine 111, cysteine 65–cysteine 138, cysteine 66–cysteine 104, cysteine 73–cysteine 97, and cysteine 91–cysteine 102. Residues tyrosine 43, glycine 45, and glycine 47 each coordinate Ca(2+). Residue histidine 63 is part of the active site. Position 64 (aspartate 64) interacts with Ca(2+). Aspartate 105 is an active-site residue.

It belongs to the phospholipase A2 family. Group II subfamily. D49 sub-subfamily. It depends on Ca(2+) as a cofactor. Expressed by the venom gland.

Its subcellular location is the secreted. The catalysed reaction is a 1,2-diacyl-sn-glycero-3-phosphocholine + H2O = a 1-acyl-sn-glycero-3-phosphocholine + a fatty acid + H(+). Functionally, PLA2 catalyzes the calcium-dependent hydrolysis of the 2-acyl groups in 3-sn-phosphoglycerides. In Protobothrops flavoviridis (Habu), this protein is Basic phospholipase A2 PLA-B'.